The sequence spans 908 residues: SH3 and PX domain-containing protein 2B (908 aa).

The PX domain occupies 5-129; sequence RSIVEVKVLD…QFFETRPEDL (125 aa). A Phosphotyrosine modification is found at tyrosine 25. 2 SH3 domains span residues 152-211 and 221-280; these read MVLE…GQDG and EEEE…KNSG. 2 positions are modified to phosphoserine: serine 279 and serine 291. Disordered regions lie at residues 280 to 300 and 315 to 366; these read GEPL…ALDL and ELLN…PPIP. Residues 315–337 show a composition bias toward basic and acidic residues; the sequence is ELLNNQRDGRFEGRLVPDGDVKQ. Over residues 338–347 the composition is skewed to basic residues; it reads RSPKMRQRPP. An SH3 3 domain is found at 368-427; it reads QVEEEYYTIAEFQTTIPDGISFQAGLKVEVIEKSLSGWWYIQMEDKEGWAPATFIDKYKK. Residues 455 to 832 are disordered; that stretch reads TENNTGPEAV…LGPRVTGKVG (378 aa). Basic and acidic residues-rich tracts occupy residues 486–499, 516–546, 569–584, 595–606, and 615–625; these read KDWK…RKAS, QEEK…KMEP, LARD…DKSK, CGHKVLAKEVKK, and SKAELSEEKVD. 2 positions are modified to phosphoserine: serine 499 and serine 528. Tyrosine 661 carries the phosphotyrosine modification. Basic and acidic residues predominate over residues 671–684; it reads KSQEKALLDGESHH. The segment covering 754–764 has biased composition (pro residues); sequence VVPPRRPPPPK. Serine 840 carries the post-translational modification Phosphoserine. The 62-residue stretch at 847-908 folds into the SH3 4 domain; sequence PKDSLYVAVA…IPSNYLRKKP (62 aa).

It belongs to the SH3PXD2 family. In terms of assembly, interacts with NOXO1. Interacts (via SH3 domains) with NOXA1; the interaction is direct. Interacts with ADAM15. Interacts with FASLG. In terms of processing, phosphorylated in SRC-transformed cells. Highly expressed in the stromal-vascular fraction of white adipose tissue with moderate expression in heart, skeletal muscle and the mature adipocyte fraction of white adipose tissue. Also expressed in brain, spleen, kidney and liver. Expressed in white and brown adipose tissues, eye, lung, heart, brain, spleen, stomach, liver and skeletal muscle (at protein level). Not expressed in kidney or bone marrow.

Its subcellular location is the cytoplasm. It localises to the cell projection. It is found in the podosome. Functionally, adapter protein involved in invadopodia and podosome formation and extracellular matrix degradation. Binds matrix metalloproteinases (ADAMs), NADPH oxidases (NOXs) and phosphoinositides. Acts as an organizer protein that allows NOX1- or NOX3-dependent reactive oxygen species (ROS) generation and ROS localization. Plays a role in mitotic clonal expansion during the immediate early stage of adipocyte differentiation. The sequence is that of SH3 and PX domain-containing protein 2B (Sh3pxd2b) from Mus musculus (Mouse).